A 360-amino-acid chain; its full sequence is S-adenosylmethionine:tRNA ribosyltransferase-isomerase (360 aa).

This sequence belongs to the QueA family. Monomer.

It localises to the cytoplasm. The catalysed reaction is 7-aminomethyl-7-carbaguanosine(34) in tRNA + S-adenosyl-L-methionine = epoxyqueuosine(34) in tRNA + adenine + L-methionine + 2 H(+). Its pathway is tRNA modification; tRNA-queuosine biosynthesis. Functionally, transfers and isomerizes the ribose moiety from AdoMet to the 7-aminomethyl group of 7-deazaguanine (preQ1-tRNA) to give epoxyqueuosine (oQ-tRNA). In Rhodopseudomonas palustris (strain TIE-1), this protein is S-adenosylmethionine:tRNA ribosyltransferase-isomerase.